Consider the following 420-residue polypeptide: D-tagatose-1,6-bisphosphate aldolase subunit GatZ (420 aa).

Belongs to the GatZ/KbaZ family. GatZ subfamily. In terms of assembly, forms a complex with GatY.

It functions in the pathway carbohydrate metabolism; D-tagatose 6-phosphate degradation; D-glyceraldehyde 3-phosphate and glycerone phosphate from D-tagatose 6-phosphate: step 2/2. Functionally, component of the tagatose-1,6-bisphosphate aldolase GatYZ that is required for full activity and stability of the Y subunit. Could have a chaperone-like function for the proper and stable folding of GatY. When expressed alone, GatZ does not show any aldolase activity. Is involved in the catabolism of galactitol. The polypeptide is D-tagatose-1,6-bisphosphate aldolase subunit GatZ (Escherichia coli O45:K1 (strain S88 / ExPEC)).